The following is a 1263-amino-acid chain: DNA-directed RNA polymerase subunit beta (1263 aa).

This sequence belongs to the RNA polymerase beta chain family. The RNAP catalytic core consists of 2 alpha, 1 beta, 1 beta' and 1 omega subunit. When a sigma factor is associated with the core the holoenzyme is formed, which can initiate transcription.

It catalyses the reaction RNA(n) + a ribonucleoside 5'-triphosphate = RNA(n+1) + diphosphate. In terms of biological role, DNA-dependent RNA polymerase catalyzes the transcription of DNA into RNA using the four ribonucleoside triphosphates as substrates. The protein is DNA-directed RNA polymerase subunit beta of Thermotoga maritima (strain ATCC 43589 / DSM 3109 / JCM 10099 / NBRC 100826 / MSB8).